The sequence spans 152 residues: UPF0311 protein blr7842 (152 aa).

The protein belongs to the UPF0311 family.

This is UPF0311 protein blr7842 from Bradyrhizobium diazoefficiens (strain JCM 10833 / BCRC 13528 / IAM 13628 / NBRC 14792 / USDA 110).